The following is a 324-amino-acid chain: Phospho-N-acetylmuramoyl-pentapeptide-transferase (324 aa).

9 helical membrane-spanning segments follow: residues 5-25, 51-71, 77-97, 117-137, 147-167, 176-196, 203-223, 227-248, and 302-322; these read VILF…PIFI, TPTM…IVMI, ISPE…LGFL, LIGQ…YQFA, VSFD…VGGS, LDGL…ILAW, VAIF…FNAH, VFMG…AILT, and VVVT…YIEV.

It belongs to the glycosyltransferase 4 family. MraY subfamily. It depends on Mg(2+) as a cofactor.

It is found in the cell membrane. It carries out the reaction UDP-N-acetyl-alpha-D-muramoyl-L-alanyl-gamma-D-glutamyl-meso-2,6-diaminopimeloyl-D-alanyl-D-alanine + di-trans,octa-cis-undecaprenyl phosphate = di-trans,octa-cis-undecaprenyl diphospho-N-acetyl-alpha-D-muramoyl-L-alanyl-D-glutamyl-meso-2,6-diaminopimeloyl-D-alanyl-D-alanine + UMP. It functions in the pathway cell wall biogenesis; peptidoglycan biosynthesis. In terms of biological role, catalyzes the initial step of the lipid cycle reactions in the biosynthesis of the cell wall peptidoglycan: transfers peptidoglycan precursor phospho-MurNAc-pentapeptide from UDP-MurNAc-pentapeptide onto the lipid carrier undecaprenyl phosphate, yielding undecaprenyl-pyrophosphoryl-MurNAc-pentapeptide, known as lipid I. This Bacillus pumilus (strain SAFR-032) protein is Phospho-N-acetylmuramoyl-pentapeptide-transferase.